A 2312-amino-acid polypeptide reads, in one-letter code: Protein Ycf2 (2312 aa).

1630-1637 (GSIGTGRS) is a binding site for ATP.

Belongs to the Ycf2 family.

The protein localises to the plastid. Its subcellular location is the chloroplast stroma. Probable ATPase of unknown function. Its presence in a non-photosynthetic plant (Epifagus virginiana) and experiments in tobacco indicate that it has an essential function which is probably not related to photosynthesis. In Manihot esculenta (Cassava), this protein is Protein Ycf2.